The primary structure comprises 419 residues: GTPase Obg (419 aa).

The Obg domain maps to 1–156; it reads MRFVDYVSIE…FYLDLQLKVM (156 aa). Residues 157-334 form the OBG-type G domain; the sequence is ADIGLVGKPN…LEEKQKKLEI (178 aa). GTP-binding positions include 163-170, 188-192, 209-212, 278-281, and 315-317; these read GKPNAGKS, FTTLV, DLPG, NKCD, and NII. The Mg(2+) site is built by serine 170 and threonine 190. Residues 342–419 form the OCT domain; that stretch reads IEFNLKAPFL…RIYEFEFHWN (78 aa).

Belongs to the TRAFAC class OBG-HflX-like GTPase superfamily. OBG GTPase family. In terms of assembly, monomer. The cofactor is Mg(2+).

Its subcellular location is the cytoplasm. In terms of biological role, an essential GTPase which binds GTP, GDP and possibly (p)ppGpp with moderate affinity, with high nucleotide exchange rates and a fairly low GTP hydrolysis rate. Plays a role in control of the cell cycle, stress response, ribosome biogenesis and in those bacteria that undergo differentiation, in morphogenesis control. The polypeptide is GTPase Obg (Mesomycoplasma hyopneumoniae (strain 232) (Mycoplasma hyopneumoniae)).